The chain runs to 121 residues: Large ribosomal subunit protein bL12 (121 aa).

The protein belongs to the bacterial ribosomal protein bL12 family. As to quaternary structure, homodimer. Part of the ribosomal stalk of the 50S ribosomal subunit. Forms a multimeric L10(L12)X complex, where L10 forms an elongated spine to which 2 to 4 L12 dimers bind in a sequential fashion. Binds GTP-bound translation factors.

In terms of biological role, forms part of the ribosomal stalk which helps the ribosome interact with GTP-bound translation factors. Is thus essential for accurate translation. This chain is Large ribosomal subunit protein bL12, found in Erwinia tasmaniensis (strain DSM 17950 / CFBP 7177 / CIP 109463 / NCPPB 4357 / Et1/99).